A 2286-amino-acid polypeptide reads, in one-letter code: MSLRSGGRRRADPGADGEASRDDGATSSVSALKRLERSQWTDKMDLRFGFERLKEPGEKTGWLINMHPTEILDEDKRLGSAVDYYFIQDDGSRFKVALPYKPYFYIATRKGCEREVSSFLSKKFQGKIAKVETVPKEDLDLPNHLVGLKRNYIRLSFHTVEDLVKVRKEISPAVKKNREQDHASDAYTALLSSVLQRGGVITDEEETSKKIADQLDNIVDMREYDVPYHIRLSIDLKIHVAHWYNVRYRGNAFPVEITRRDDLVERPDPVVLAFDIETTKLPLKFPDAETDQIMMISYMIDGQGYLITNREIVSEDIEDFEFTPKPEYEGPFCVFNEPDEAHLIQRWFEHVQETKPTIMVTYNGDFFDWPFVEARAAVHGLSMQQEIGFQKDSQGEYKAPQCIHMDCLRWVKRDSYLPVGSHNLKAAAKAKLGYDPVELDPEDMCRMATEQPQTLATYSVSDAVATYYLYMKYVHPFIFALCTIIPMEPDEVLRKGSGTLCEALLMVQAFHANIIFPNKQEQEFNKLTDDGHVLDSETYVGGHVEALESGVFRSDIPCRFRMNPAAFDFLLQRVEKTLRHALEEEEKVPVEQVTNFEEVCDEIKSKLASLKDVPSRIECPLIYHLDVGAMYPNIILTNRLQPSAMVDEATCAACDFNKPGANCQRKMAWQWRGEFMPASRSEYHRIQHQLESEKFPPLFPEGPARAFHELSREEQAKYEKRRLADYCRKAYKKIHITKVEERLTTICQRENSFYVDTVRAFRDRRYEFKGLHKVWKKKLSAAVEVGDAAEVKRCKNMEVLYDSLQLAHKCILNSFYGYVMRKGARWYSMEMAGIVCFTGANIITQARELIEQIGRPLELDTDGIWCVLPNSFPENFVFKTTNVKKPKVTISYPGAMLNIMVKEGFTNDQYQELAEPSSLTYVTRSENSIFFEVDGPYLAMILPASKEEGKKLKKRYAVFNEDGSLAELKGFEVKRRGELQLIKIFQSSVFEAFLKGSTLEEVYGSVAKVADYWLDVLYSKAANMPDSELFELISENRSMSRKLEDYGEQKSTSISTAKRLAEFLGDQMVKDAGLSCRYIISRKPEGSPVTERAIPLAIFQAEPTVRKHFLRKWLKSSSLQDFDIRAILDWDYYIERLGSAIQKIITIPAALQQVKNPVPRVKHPDWLHKKLLEKNDVYKQKKISELFTLEGRRQVTMAEASEDSPRPSAPDMEDFGLVKLPHPAAPVTVKRKRVLWESQEESQDLTPTVPWQEILGQPPALGTSQEEWLVWLRFHKKKWQLQARQRLARRKRQRLESAEGVLRPGAIRDGPATGLGSFLRRTARSILDLPWQIVQISETSQAGLFRLWALVGSDLHCIRLSIPRVFYVNQRVAKAEEGASYRKVNRVLPRSNMVYNLYEYSVPEDMYQEHINEINAELSAPDIEGVYETQVPLLFRALVHLGCVCVVNKQLVRHLSGWEAETFALEHLEMRSLAQFSYLEPGSIRHIYLYHHAQAHKALFGIFIPSQRRASVFVLDTVRSNQMPSLGALYSAEHGLLLEKVGPELLPPPKHTFEVRAETDLKTICRAIQRFLLAYKEERRGPTLIAVQSSWELKRLASEIPVLEEFPLVPICVADKINYGVLDWQRHGARRMIRHYLNLDTCLSQAFEMSRYFHIPIGNLPEDISTFGSDLFFARHLQRHNHLLWLSPTARPDLGGKEADDNCLVMEFDDQATVEINSSGCYSTVCVELDLQNLAVNTILQSHHVNDMEGADSMGISFDVIQQASLEDMITGGQAASAPASYDETALCSNTFRILKSMVVGWVKEITQYHNIYADNQVMHFYRWLRSPSSLLHDPALHRTLHNMMKKLFLQLIAEFKRLGSSVIYANFNRIILCTKKRRVEDAIAYVEYITSSIHSKETFHSLTISFSRCWEFLLWMDPSNYGGIKGKVSSRIHCGLQDSQKAGGAEDEQENEDDEEERDGEEEEEAEESNVEDLLENNWNILQFLPQAASCQNYFLMIVSAYIVAVYHCMKDGLRRSAPGSTPVRRRGASQLSQEAEGAVGALPGMITFSQDYVANELTQSFFTITQKIQKKVTGSRNSTELSEMFPVLPGSHLLLNNPALEFIKYVCKVLSLDTNITNQVNKLNRDLLRLVDVGEFSEEAQFRDPCRSYVLPEVICRSCNFCRDLDLCKDSSFSEDGAVLPQWLCSNCQAPYDSSAIEMTLVEVLQKKLMAFTLQDLVCLKCRGVKETSMPVYCSCAGDFALTIHTQVFMEQIGIFRNIAQHYGMSYLLETLEWLLQKNPQLGH.

A disordered region spans residues 1-30; that stretch reads MSLRSGGRRRADPGADGEASRDDGATSSVS. Over residues 9–24 the composition is skewed to basic and acidic residues; it reads RRADPGADGEASRDDG. Phosphoserine occurs at positions 1184, 1297, 1317, and 1940. The segment at 1939 to 1969 is disordered; that stretch reads DSQKAGGAEDEQENEDDEEERDGEEEEEAEE. Positions 1946–1969 are enriched in acidic residues; that stretch reads AEDEQENEDDEEERDGEEEEEAEE. Cys-2158, Cys-2161, Cys-2187, and Cys-2190 together coordinate Zn(2+). A CysA-type zinc finger spans residues 2158-2190; it reads CRSCNFCRDLDLCKDSSFSEDGAVLPQWLCSNC. [4Fe-4S] cluster contacts are provided by Cys-2221, Cys-2224, Cys-2236, and Cys-2238. The CysB motif signature appears at 2221 to 2238; the sequence is CLKCRGVKETSMPVYCSC.

It belongs to the DNA polymerase type-B family. In terms of assembly, component of the DNA polymerase epsilon complex consisting of four subunits: the catalytic subunit POLE and the accessory subunits POLE2, POLE3 and POLE4. Interacts with RAD17 and TOPBP1.

The protein resides in the nucleus. It carries out the reaction DNA(n) + a 2'-deoxyribonucleoside 5'-triphosphate = DNA(n+1) + diphosphate. In terms of biological role, catalytic component of the DNA polymerase epsilon complex. Participates in chromosomal DNA replication. Required during synthesis of the leading DNA strands at the replication fork, binds at/or near replication origins and moves along DNA with the replication fork. Has 3'-5' proofreading exonuclease activity that corrects errors arising during DNA replication. Involved in DNA synthesis during DNA repair. Along with DNA polymerase POLD1 and DNA polymerase POLK, has a role in excision repair (NER) synthesis following UV irradiation. In Homo sapiens (Human), this protein is DNA polymerase epsilon catalytic subunit A.